Reading from the N-terminus, the 135-residue chain is UPF0102 protein RPC_0320 (135 aa).

Belongs to the UPF0102 family.

The protein is UPF0102 protein RPC_0320 of Rhodopseudomonas palustris (strain BisB18).